The chain runs to 613 residues: Serine/threonine-protein kinase pkpA (613 aa).

The Protein kinase domain maps to 17 to 269 (SKLNTVLGKG…AQEILEHRFL (253 aa)). ATP-binding positions include 23-31 (LGKGAYKVV) and lysine 50. The active-site Proton acceptor is aspartate 140. Disordered regions lie at residues 424 to 475 (LQPQ…STML) and 589 to 613 (VTQR…QELM). Residues 427–441 (QPQPQPQPQPQPQPQ) are compositionally biased toward pro residues. Low complexity predominate over residues 442–475 (PQFQLQPQLQYLSPQSTTSPGPTSDDNSTNSTML). The span at 592–602 (RGLQGTRSGAS) shows a compositional bias: polar residues.

Belongs to the protein kinase superfamily. Ser/Thr protein kinase family.

It catalyses the reaction L-seryl-[protein] + ATP = O-phospho-L-seryl-[protein] + ADP + H(+). It carries out the reaction L-threonyl-[protein] + ATP = O-phospho-L-threonyl-[protein] + ADP + H(+). In terms of biological role, serine/threonine protein kinase that probably participates as an intermediate in an intracellular system controlling nuclear proliferation. This is Serine/threonine-protein kinase pkpA (pkpA) from Phycomyces blakesleeanus (strain ATCC 8743b / DSM 1359 / FGSC 10004 / NBRC 33097 / NRRL 1555).